Consider the following 627-residue polypeptide: Ski protein homolog (627 aa).

The span at Met-1–Val-12 shows a compositional bias: polar residues. 3 disordered regions span residues Met-1–Met-22, Leu-34–Arg-58, and Glu-299–Pro-318.

The protein belongs to the SKI family. In terms of assembly, may interact with daf-3. Expressed in ganglia in the head and tail and in the anterior pharynx.

Its subcellular location is the nucleus. In terms of biological role, probable component of transcriptional regulatory complex with SMAD protein daf-3. Required to regulate entry into a developmentally arrested larval state known as dauer, in response to harsh environmental conditions. Involved in larvae undergoing cell-cycle arrest during the dauer stage. The sequence is that of Ski protein homolog from Caenorhabditis elegans.